The following is a 269-amino-acid chain: Glutamate racemase (269 aa).

Residues 7–8 and 39–40 contribute to the substrate site; these read DS and YG. Cysteine 70 (proton donor/acceptor) is an active-site residue. Substrate is bound at residue 71-72; sequence NT. Residue cysteine 194 is the Proton donor/acceptor of the active site. 195-196 contributes to the substrate binding site; it reads TH.

This sequence belongs to the aspartate/glutamate racemases family.

It catalyses the reaction L-glutamate = D-glutamate. The protein operates within cell wall biogenesis; peptidoglycan biosynthesis. Provides the (R)-glutamate required for cell wall biosynthesis. This is Glutamate racemase from Ruegeria sp. (strain TM1040) (Silicibacter sp.).